Consider the following 98-residue polypeptide: NADH-ubiquinone oxidoreductase chain 4L (98 aa).

The next 3 helical transmembrane spans lie at 1 to 21, 29 to 49, and 61 to 81; these read MSLV…GLLM, ALLC…LTIL, and IILL…LVMI.

This sequence belongs to the complex I subunit 4L family. Core subunit of respiratory chain NADH dehydrogenase (Complex I) which is composed of 45 different subunits.

The protein resides in the mitochondrion inner membrane. It carries out the reaction a ubiquinone + NADH + 5 H(+)(in) = a ubiquinol + NAD(+) + 4 H(+)(out). Its function is as follows. Core subunit of the mitochondrial membrane respiratory chain NADH dehydrogenase (Complex I) which catalyzes electron transfer from NADH through the respiratory chain, using ubiquinone as an electron acceptor. Part of the enzyme membrane arm which is embedded in the lipid bilayer and involved in proton translocation. The sequence is that of NADH-ubiquinone oxidoreductase chain 4L (MT-ND4L) from Delphinapterus leucas (Beluga whale).